The primary structure comprises 87 residues: MVGLSNGEIPLVQIFVRDNNVDQALKALKKKMQREGSFREMKRHVHYEKPSEKRARQKAEAVRRARKLARKRAQREGLLPMPKKPGR.

The segment covering 47-63 (YEKPSEKRARQKAEAVR) has biased composition (basic and acidic residues). The segment at 47–87 (YEKPSEKRARQKAEAVRRARKLARKRAQREGLLPMPKKPGR) is disordered. Residues 64-73 (RARKLARKRA) show a composition bias toward basic residues.

This sequence belongs to the bacterial ribosomal protein bS21 family.

This chain is Small ribosomal subunit protein bS21, found in Caulobacter vibrioides (strain ATCC 19089 / CIP 103742 / CB 15) (Caulobacter crescentus).